Reading from the N-terminus, the 1211-residue chain is DNA polymerase beta (1211 aa).

Tandem repeats lie at residues 1074-1077 (KPAG), 1078-1081 (KPAG), 1082-1085 (NPAG), and 1086-1089 (NPAG). The interval 1074–1089 (KPAGKPAGNPAGNPAG) is 4 X 4 AA tandem repeats of [NK]-[P]-A-G.

Belongs to the DNA polymerase type-B family.

The catalysed reaction is DNA(n) + a 2'-deoxyribonucleoside 5'-triphosphate = DNA(n+1) + diphosphate. Functionally, DNA-directed DNA polymerase involved in viral DNA replication. This chain is DNA polymerase beta (DPOL), found in African swine fever virus (strain Badajoz 1971 Vero-adapted) (Ba71V).